Reading from the N-terminus, the 227-residue chain is Thymidine kinase 1 (227 aa).

Residues 15–22 (GPMFSGKT), 47–49 (DTR), and 91–94 (DEGQ) contribute to the ATP site. E92 (proton acceptor) is an active-site residue. Substrate is bound at residue F122. Residues C147 and C150 each contribute to the Zn(2+) site. Substrate is bound by residues 166 to 170 (IELIG) and Y175. Residues C179 and C182 each coordinate Zn(2+). A compositionally biased stretch (polar residues) spans 187-196 (QNEGNSTKPS). Positions 187 to 227 (QNEGNSTKPSKTARHSHSQSAPSVAPLAVNINPDDHLNNDY) are disordered.

The protein belongs to the thymidine kinase family. Interacts with calmodulin in the presence of Ca(2+).

It catalyses the reaction thymidine + ATP = dTMP + ADP + H(+). The sequence is that of Thymidine kinase 1 from Dictyostelium discoideum (Social amoeba).